Here is a 345-residue protein sequence, read N- to C-terminus: Molybdate/tungstate import ATP-binding protein WtpC (345 aa).

The ABC transporter domain occupies 2-231 (LKVESISKDY…PKSEEVARFL (230 aa)). ATP is bound at residue 33–40 (GPSGSGKT). Residues 280–345 (KTSARNVFKA…FKASAIHVFP (66 aa)) form the Mop domain.

The protein belongs to the ABC transporter superfamily. Sulfate/tungstate importer (TC 3.A.1.6) family. In terms of assembly, the complex is composed of two ATP-binding proteins (WtpC), two transmembrane proteins (WtpB) and a solute-binding protein (WtpA).

The protein localises to the cell membrane. The enzyme catalyses tungstate(in) + ATP + H2O = tungstate(out) + ADP + phosphate + H(+). Functionally, part of the ABC transporter complex WtpABC involved in molybdate/tungstate import. Responsible for energy coupling to the transport system. In Pyrococcus horikoshii (strain ATCC 700860 / DSM 12428 / JCM 9974 / NBRC 100139 / OT-3), this protein is Molybdate/tungstate import ATP-binding protein WtpC (wtpC).